The following is a 122-amino-acid chain: Small ribosomal subunit protein uS13 (122 aa).

Residues 95–122 (GLPVRGQRTHTNARTRKGKAKPIAGKKK) form a disordered region.

The protein belongs to the universal ribosomal protein uS13 family. As to quaternary structure, part of the 30S ribosomal subunit. Forms a loose heterodimer with protein S19. Forms two bridges to the 50S subunit in the 70S ribosome.

Located at the top of the head of the 30S subunit, it contacts several helices of the 16S rRNA. In the 70S ribosome it contacts the 23S rRNA (bridge B1a) and protein L5 of the 50S subunit (bridge B1b), connecting the 2 subunits; these bridges are implicated in subunit movement. Contacts the tRNAs in the A and P-sites. The protein is Small ribosomal subunit protein uS13 of Sphingopyxis alaskensis (strain DSM 13593 / LMG 18877 / RB2256) (Sphingomonas alaskensis).